The primary structure comprises 350 residues: Pleckstrin (350 aa).

The PH 1 domain maps to 4–101 (KRIREGYLVK…WVRDIKKAIK (98 aa)). At Lys-64 the chain carries N6-acetyllysine. Phosphoserine is present on residues Ser-113 and Ser-117. Residues 136–221 (PEKGIKELNL…SPDAFYYFPD (86 aa)) form the DEP domain. The PH 2 domain maps to 244–347 (VIIKQGCLLK…WIKAIQVASR (104 aa)).

Its function is as follows. Major protein kinase C substrate of platelets. The polypeptide is Pleckstrin (Plek) (Mus musculus (Mouse)).